Reading from the N-terminus, the 122-residue chain is Large ribosomal subunit protein eL18 (122 aa).

The protein belongs to the eukaryotic ribosomal protein eL18 family.

The polypeptide is Large ribosomal subunit protein eL18 (Pyrobaculum aerophilum (strain ATCC 51768 / DSM 7523 / JCM 9630 / CIP 104966 / NBRC 100827 / IM2)).